Reading from the N-terminus, the 283-residue chain is Elongation factor Ts (283 aa).

An involved in Mg(2+) ion dislocation from EF-Tu region spans residues 80 to 83 (TDFV).

The protein belongs to the EF-Ts family.

The protein resides in the cytoplasm. In terms of biological role, associates with the EF-Tu.GDP complex and induces the exchange of GDP to GTP. It remains bound to the aminoacyl-tRNA.EF-Tu.GTP complex up to the GTP hydrolysis stage on the ribosome. This is Elongation factor Ts from Erwinia tasmaniensis (strain DSM 17950 / CFBP 7177 / CIP 109463 / NCPPB 4357 / Et1/99).